The following is a 569-amino-acid chain: Probable protein phosphatase 2C BIPP2C1 (569 aa).

Disordered regions lie at residues 166–212 (GSSN…SSKV) and 251–279 (SLDD…GSSI). Over residues 174-183 (SEVGVESECG) the composition is skewed to low complexity. The 236-residue stretch at 329-564 (AAMLPHPSKV…DDVTVVVSVV (236 aa)) folds into the PPM-type phosphatase domain. Mn(2+)-binding residues include Asp358, Gly359, Asp488, and Asp555.

The protein belongs to the PP2C family. The cofactor is Mg(2+). Requires Mn(2+) as cofactor.

The catalysed reaction is O-phospho-L-seryl-[protein] + H2O = L-seryl-[protein] + phosphate. The enzyme catalyses O-phospho-L-threonyl-[protein] + H2O = L-threonyl-[protein] + phosphate. May play a role in responses to biotic and abiotic stresses. This is Probable protein phosphatase 2C BIPP2C1 (BIPP2C1) from Oryza sativa subsp. indica (Rice).